The chain runs to 362 residues: UDP-N-acetylglucosamine--N-acetylmuramyl-(pentapeptide) pyrophosphoryl-undecaprenol N-acetylglucosamine transferase (362 aa).

UDP-N-acetyl-alpha-D-glucosamine-binding positions include 15 to 17, N127, R165, S191, I247, 266 to 271, and Q292; these read TGG and ALTVSE.

It belongs to the glycosyltransferase 28 family. MurG subfamily.

The protein resides in the cell inner membrane. It carries out the reaction di-trans,octa-cis-undecaprenyl diphospho-N-acetyl-alpha-D-muramoyl-L-alanyl-D-glutamyl-meso-2,6-diaminopimeloyl-D-alanyl-D-alanine + UDP-N-acetyl-alpha-D-glucosamine = di-trans,octa-cis-undecaprenyl diphospho-[N-acetyl-alpha-D-glucosaminyl-(1-&gt;4)]-N-acetyl-alpha-D-muramoyl-L-alanyl-D-glutamyl-meso-2,6-diaminopimeloyl-D-alanyl-D-alanine + UDP + H(+). It functions in the pathway cell wall biogenesis; peptidoglycan biosynthesis. Cell wall formation. Catalyzes the transfer of a GlcNAc subunit on undecaprenyl-pyrophosphoryl-MurNAc-pentapeptide (lipid intermediate I) to form undecaprenyl-pyrophosphoryl-MurNAc-(pentapeptide)GlcNAc (lipid intermediate II). The protein is UDP-N-acetylglucosamine--N-acetylmuramyl-(pentapeptide) pyrophosphoryl-undecaprenol N-acetylglucosamine transferase of Shewanella oneidensis (strain ATCC 700550 / JCM 31522 / CIP 106686 / LMG 19005 / NCIMB 14063 / MR-1).